A 125-amino-acid polypeptide reads, in one-letter code: Glycine cleavage system H protein (125 aa).

Residues Val-19–Lys-101 enclose the Lipoyl-binding domain. Lys-60 bears the N6-lipoyllysine mark.

Belongs to the GcvH family. As to quaternary structure, the glycine cleavage system is composed of four proteins: P, T, L and H. It depends on (R)-lipoate as a cofactor.

Functionally, the glycine cleavage system catalyzes the degradation of glycine. The H protein shuttles the methylamine group of glycine from the P protein to the T protein. This Xanthobacter autotrophicus (strain ATCC BAA-1158 / Py2) protein is Glycine cleavage system H protein.